A 297-amino-acid polypeptide reads, in one-letter code: Mitochondrial nicotinamide adenine dinucleotide transporter SLC25A52 (297 aa).

Solcar repeat units lie at residues 28–108 (VGEM…LSCL), 116–200 (PEFA…IKEH), and 209–296 (AHLV…LLKF). A run of 6 helical transmembrane segments spans residues 34–51 (YLCG…TYPI), 85–105 (LPPL…YEDL), 118–138 (FATH…FTPL), 179–199 (ILFR…PIKE), 215–235 (FIGG…INVV), and 268–289 (LFRG…INAT).

It belongs to the mitochondrial carrier (TC 2.A.29) family.

It is found in the mitochondrion inner membrane. The catalysed reaction is NAD(+)(in) = NAD(+)(out). Mitochondrial membrane carrier protein that mediates the import of NAD(+) into mitochondria. Compared to SLC25A51, SLC25A52-mediated transport is not essential for the import of NAD(+) in mitochondria. The transport mechanism, uniport or antiport, its electrogenicity and substrate selectivity, remain to be elucidated. This chain is Mitochondrial nicotinamide adenine dinucleotide transporter SLC25A52, found in Homo sapiens (Human).